The primary structure comprises 507 residues: Maturase K (507 aa).

Belongs to the intron maturase 2 family. MatK subfamily.

The protein localises to the plastid. It is found in the chloroplast. Functionally, usually encoded in the trnK tRNA gene intron. Probably assists in splicing its own and other chloroplast group II introns. This chain is Maturase K, found in Asimina triloba (Pawpaw).